Reading from the N-terminus, the 150-residue chain is Ribosome maturation factor RimP (150 aa).

The protein belongs to the RimP family.

The protein localises to the cytoplasm. Functionally, required for maturation of 30S ribosomal subunits. This chain is Ribosome maturation factor RimP, found in Francisella tularensis subsp. holarctica (strain LVS).